Reading from the N-terminus, the 150-residue chain is UPF0336 protein SCO4636 (150 aa).

One can recognise a MaoC-like domain in the interval Val8–Ala116.

This sequence belongs to the UPF0336 family.

This is UPF0336 protein SCO4636 from Streptomyces coelicolor (strain ATCC BAA-471 / A3(2) / M145).